Here is a 505-residue protein sequence, read N- to C-terminus: Probable malate:quinone oxidoreductase (505 aa).

Belongs to the MQO family. FAD is required as a cofactor.

The catalysed reaction is (S)-malate + a quinone = a quinol + oxaloacetate. It functions in the pathway carbohydrate metabolism; tricarboxylic acid cycle; oxaloacetate from (S)-malate (quinone route): step 1/1. This Pseudomonas fluorescens protein is Probable malate:quinone oxidoreductase.